The primary structure comprises 603 residues: Terpenoid synthase 22 (603 aa).

Residues Asp356, Asp360, Asn500, and Glu508 each contribute to the Mg(2+) site. Residues 356-360 (DDTCD) carry the DDXXD motif motif.

It belongs to the terpene synthase family. Tpsa subfamily. The cofactor is Mg(2+). Requires Mn(2+) as cofactor. In terms of tissue distribution, predominantly expressed in siliques but also in flowers.

It is found in the cytoplasm. The protein operates within secondary metabolite biosynthesis; terpenoid biosynthesis. Involved in terpene biosynthesis in roots. Possesses sesquiterpene (C15) synthase activity in vitro. Does not seem to be involved in diterpene (C20) biosynthesis. The protein is Terpenoid synthase 22 of Arabidopsis thaliana (Mouse-ear cress).